The primary structure comprises 294 residues: Sperm acrosome membrane-associated protein 1 (294 aa).

The signal sequence occupies residues Met-1–Gly-29. Topologically, residues Thr-30 to Phe-221 are extracellular. A glycan (N-linked (GlcNAc...) asparagine) is linked at Asn-31. Positions Ala-42–Val-70 are disordered. The segment covering Glu-46 to Thr-58 has biased composition (acidic residues). Residues Val-222–Ile-242 form a helical membrane-spanning segment. The Cytoplasmic segment spans residues Asn-243–Glu-294. At Ser-256 the chain carries Phosphoserine. Positions Pro-258 to Val-267 are enriched in polar residues. The segment at Pro-258–Glu-294 is disordered. Residue Tyr-269 is modified to Phosphotyrosine. Acidic residues predominate over residues Pro-283–Glu-294. Position 290 is a phosphoserine (Ser-290).

In terms of assembly, interacts with CYLC1; the interaction may be relevant for proper acrosome attachment to the nuclear envelope. Post-translationally, N-glycosylated. Testis specific.

The protein resides in the cytoplasmic vesicle. It is found in the secretory vesicle. The protein localises to the acrosome inner membrane. Functionally, plays a role in acrosome formation and establishment of normal sperm morphology during spermatogenesis. Important for male fertility. This is Sperm acrosome membrane-associated protein 1 (SPACA1) from Homo sapiens (Human).